We begin with the raw amino-acid sequence, 314 residues long: Acetaldehyde dehydrogenase 2 (314 aa).

Position 15–18 (15–18 (SGNI)) interacts with NAD(+). Residue cysteine 133 is the Acyl-thioester intermediate of the active site. NAD(+)-binding positions include 164–172 (SAGPGTRAN) and asparagine 291.

This sequence belongs to the acetaldehyde dehydrogenase family.

It catalyses the reaction acetaldehyde + NAD(+) + CoA = acetyl-CoA + NADH + H(+). The sequence is that of Acetaldehyde dehydrogenase 2 from Pseudomonas putida (strain ATCC 700007 / DSM 6899 / JCM 31910 / BCRC 17059 / LMG 24140 / F1).